The following is a 130-amino-acid chain: Small ribosomal subunit protein bS6 (130 aa).

Residues 100–130 are disordered; sequence SPMVKAKDERRERHDFASEANDDSEAGDSEE. Residues 104–116 are compositionally biased toward basic and acidic residues; sequence KAKDERRERHDFA. Residues 119–130 show a composition bias toward acidic residues; it reads ANDDSEAGDSEE.

It belongs to the bacterial ribosomal protein bS6 family.

Its function is as follows. Binds together with bS18 to 16S ribosomal RNA. This chain is Small ribosomal subunit protein bS6, found in Yersinia pestis (strain Pestoides F).